We begin with the raw amino-acid sequence, 252 residues long: 14-3-3 protein homolog 1 (252 aa).

Belongs to the 14-3-3 family.

In Schistosoma mansoni (Blood fluke), this protein is 14-3-3 protein homolog 1.